We begin with the raw amino-acid sequence, 197 residues long: Probable GTP-binding protein EngB (197 aa).

The EngB-type G domain occupies 22 to 197 (TGVEVAFAGR…FKEKLDTWYQ (176 aa)). Residues 30 to 37 (GRSNAGKS), 57 to 61 (GRTQL), 75 to 78 (DLPG), 142 to 145 (TKAD), and 177 to 179 (FSS) contribute to the GTP site. Mg(2+) contacts are provided by S37 and T59.

Belongs to the TRAFAC class TrmE-Era-EngA-EngB-Septin-like GTPase superfamily. EngB GTPase family. Mg(2+) serves as cofactor.

Its function is as follows. Necessary for normal cell division and for the maintenance of normal septation. This Francisella tularensis subsp. tularensis (strain FSC 198) protein is Probable GTP-binding protein EngB.